The primary structure comprises 420 residues: 3-phosphoshikimate 1-carboxyvinyltransferase (420 aa).

The 3-phosphoshikimate site is built by K26, S27, and R31. K26 is a phosphoenolpyruvate binding site. Residues G97 and R125 each contribute to the phosphoenolpyruvate site. Residues S170, S171, Q172, D297, N320, and K324 each contribute to the 3-phosphoshikimate site. Q172 provides a ligand contact to phosphoenolpyruvate. D297 functions as the Proton acceptor in the catalytic mechanism. 3 residues coordinate phosphoenolpyruvate: R328, R375, and K400.

This sequence belongs to the EPSP synthase family. In terms of assembly, monomer.

The protein localises to the cytoplasm. It catalyses the reaction 3-phosphoshikimate + phosphoenolpyruvate = 5-O-(1-carboxyvinyl)-3-phosphoshikimate + phosphate. It participates in metabolic intermediate biosynthesis; chorismate biosynthesis; chorismate from D-erythrose 4-phosphate and phosphoenolpyruvate: step 6/7. Its function is as follows. Catalyzes the transfer of the enolpyruvyl moiety of phosphoenolpyruvate (PEP) to the 5-hydroxyl of shikimate-3-phosphate (S3P) to produce enolpyruvyl shikimate-3-phosphate and inorganic phosphate. The protein is 3-phosphoshikimate 1-carboxyvinyltransferase of Rhizobium etli (strain ATCC 51251 / DSM 11541 / JCM 21823 / NBRC 15573 / CFN 42).